Here is a 362-residue protein sequence, read N- to C-terminus: Bifunctional chorismate mutase/prephenate dehydratase (362 aa).

The 92-residue stretch at M1–K92 folds into the Chorismate mutase domain. Substrate-binding residues include R8, R25, K36, and E49. The Prephenate dehydratase domain maps to V93–K267. Residues S279 to P356 form the ACT domain.

The protein localises to the cytoplasm. It catalyses the reaction chorismate = prephenate. It carries out the reaction prephenate + H(+) = 3-phenylpyruvate + CO2 + H2O. It functions in the pathway amino-acid biosynthesis; L-phenylalanine biosynthesis; phenylpyruvate from prephenate: step 1/1. It participates in metabolic intermediate biosynthesis; prephenate biosynthesis; prephenate from chorismate: step 1/1. Its function is as follows. Catalyzes the Claisen rearrangement of chorismate to prephenate and the decarboxylation/dehydration of prephenate to phenylpyruvate. The sequence is that of Bifunctional chorismate mutase/prephenate dehydratase (pheA) from Aquifex aeolicus (strain VF5).